The chain runs to 540 residues: [Co(II) methylated amine-specific corrinoid protein] reductase (540 aa).

2 consecutive 4Fe-4S ferredoxin-type domains span residues 471 to 500 (IILEVPVEKCVYCKKCVKECPEAALEIVER) and 504 to 535 (RIAKYDSQKCLGTSCRRCVGVCPEDAIDITKL). C480, C483, C486, C490, C513, C518, C521, and C525 together coordinate [4Fe-4S] cluster.

Monomer. [4Fe-4S] cluster is required as a cofactor.

It carries out the reaction 2 Co(II)-[methylamine-specific corrinoid protein] + AH2 + ATP + H2O = 2 Co(I)-[methylamine-specific corrinoid protein] + A + ADP + phosphate + 3 H(+). It catalyses the reaction 2 Co(II)-[dimethylamine-specific corrinoid protein] + AH2 + ATP + H2O = 2 Co(I)-[dimethylamine-specific corrinoid protein] + A + ADP + phosphate + 3 H(+). The enzyme catalyses 2 Co(II)-[trimethylamine-specific corrinoid protein] + AH2 + ATP + H2O = 2 Co(I)-[trimethylamine-specific corrinoid protein] + A + ADP + phosphate + 3 H(+). It participates in one-carbon metabolism; methanogenesis from methylamine. It functions in the pathway one-carbon metabolism; methanogenesis from dimethylamine. Its pathway is one-carbon metabolism; methanogenesis from trimethylamine. Functionally, reductase required for the activation of corrinoid-dependent methylamine methyltransferase reactions during methanogenesis. Mediates the ATP-dependent reduction of corrinoid proteins from the inactive cobalt(II) state to the active cobalt(I) state. Acts on the corrinoid proteins involved in methanogenesis from monomethylamine (MMA), dimethylamine (DMA) and trimethylamine (TMA), namely MtmC, MtbC and MttC, respectively. The sequence is that of [Co(II) methylated amine-specific corrinoid protein] reductase from Methanosarcina barkeri.